A 150-amino-acid polypeptide reads, in one-letter code: Large ribosomal subunit protein bL9 (150 aa).

It belongs to the bacterial ribosomal protein bL9 family.

Its function is as follows. Binds to the 23S rRNA. This Shewanella piezotolerans (strain WP3 / JCM 13877) protein is Large ribosomal subunit protein bL9.